We begin with the raw amino-acid sequence, 79 residues long: Protein RALF-like 35 (79 aa).

The first 29 residues, 1-29 (MAAHKMSLTSLFFVSIVIVLSLFSGFGEG), serve as a signal peptide directing secretion. 2 cysteine pairs are disulfide-bonded: Cys-45/Cys-52 and Cys-66/Cys-72. N-linked (GlcNAc...) asparagine glycosylation occurs at Asn-68.

Belongs to the plant rapid alkalinization factor (RALF) family.

Its subcellular location is the secreted. In terms of biological role, cell signaling peptide that may regulate plant stress, growth, and development. Mediates a rapid alkalinization of extracellular space by mediating a transient increase in the cytoplasmic Ca(2+) concentration leading to a calcium-dependent signaling events through a cell surface receptor and a concomitant activation of some intracellular mitogen-activated protein kinases. The sequence is that of Protein RALF-like 35 from Arabidopsis thaliana (Mouse-ear cress).